Consider the following 294-residue polypeptide: 4-hydroxy-tetrahydrodipicolinate synthase (294 aa).

Thr45 contributes to the pyruvate binding site. Tyr133 acts as the Proton donor/acceptor in catalysis. Lys161 acts as the Schiff-base intermediate with substrate in catalysis. Ile203 contributes to the pyruvate binding site.

Belongs to the DapA family. As to quaternary structure, homotetramer; dimer of dimers.

The protein localises to the cytoplasm. It carries out the reaction L-aspartate 4-semialdehyde + pyruvate = (2S,4S)-4-hydroxy-2,3,4,5-tetrahydrodipicolinate + H2O + H(+). It functions in the pathway amino-acid biosynthesis; L-lysine biosynthesis via DAP pathway; (S)-tetrahydrodipicolinate from L-aspartate: step 3/4. Functionally, catalyzes the condensation of (S)-aspartate-beta-semialdehyde [(S)-ASA] and pyruvate to 4-hydroxy-tetrahydrodipicolinate (HTPA). This is 4-hydroxy-tetrahydrodipicolinate synthase from Buchnera aphidicola subsp. Baizongia pistaciae (strain Bp).